The sequence spans 327 residues: E3 ubiquitin-protein ligase SINAT4 (327 aa).

Positions 1-27 (METDSMECVSSTGNEIHQNGNGHQSYQ) are disordered. The segment covering 8 to 27 (CVSSTGNEIHQNGNGHQSYQ) has biased composition (polar residues). Residues 64–100 (CPVCTYSMYPPIHQCHNGHTLCSTCKVRVHNRCPTCR) form an RING-type zinc finger. Residues 114–307 (VAESLELPCK…KELKLRVTGK (194 aa)) form an SBD region. An SIAH-type zinc finger spans residues 117-177 (SLELPCKFYN…LVAHLRDDHK (61 aa)). Zn(2+)-binding residues include Cys-122, Cys-129, His-141, Cys-145, Cys-152, Cys-159, His-171, and His-176.

This sequence belongs to the SINA (Seven in absentia) family. In terms of assembly, interacts with SINAT6. Interacts with WAV3. Interacts with FREE1. Interacts with ELC/VPS23A.

The protein resides in the endosome. The protein localises to the multivesicular body. It is found in the cytoplasmic vesicle. Its subcellular location is the autophagosome. The catalysed reaction is S-ubiquitinyl-[E2 ubiquitin-conjugating enzyme]-L-cysteine + [acceptor protein]-L-lysine = [E2 ubiquitin-conjugating enzyme]-L-cysteine + N(6)-ubiquitinyl-[acceptor protein]-L-lysine.. The protein operates within protein modification; protein ubiquitination. E3 ubiquitin-protein ligase that mediates ubiquitination and subsequent proteasomal degradation of target proteins. E3 ubiquitin ligases accept ubiquitin from an E2 ubiquitin-conjugating enzyme in the form of a thioester and then directly transfers the ubiquitin to targeted substrates. It probably triggers the ubiquitin-mediated degradation of different substrates. Modulates directly the ubiquitination and proteasomal-dependent degradation of FREE1, a component of the ESCRT-I complex. Modulates directly the ubiquitination and proteasomal-dependent degradation of ELC/VPS23A, a component of the ESCRT-I complex. This chain is E3 ubiquitin-protein ligase SINAT4, found in Arabidopsis thaliana (Mouse-ear cress).